The chain runs to 240 residues: Spore coat polysaccharide biosynthesis protein SpsF (240 aa).

It belongs to the CMP-NeuNAc synthase family.

It functions in the pathway spore coat biogenesis; spore coat polysaccharide biosynthesis. This Bacillus subtilis (strain 168) protein is Spore coat polysaccharide biosynthesis protein SpsF (spsF).